The chain runs to 485 residues: Aerolysin-5 (485 aa).

An N-terminal signal peptide occupies residues 1-23 (MQKLKITGLSLIISGLLMAQRHA). Cystine bridges form between C42-C98 and C182-C187. Residues 68-84 (WQISGLANGWVIMGPVY) are interaction with host N-linked glycan. The part of the transmembrane beta-barrel after proteolytic activation of the toxin and insertion into the host membrane stretch occupies residues 256–288 (YGLSEKVTTKNKFKWPLVGETELSIEIAANQSW). The segment at 346–355 (RWGGNAWYTH) is interaction with glycans from host GPI-anchor. Residues 446-485 (AADGKAPRALSARRGEQGLRLAIPLECRKSSPGLASATSA) constitute a propeptide that is removed on maturation.

This sequence belongs to the aerolysin family. In terms of assembly, homodimer in solution; homoheptamer in the host membrane. After binding to GPI-anchored proteins in target membranes and proteolytic removal of the C-terminal propeptide, the protein assembles into a heptameric pre-pore complex. A further conformation change leads to insertion into the host membrane. In terms of processing, proteolytic cleavage and subsequent release of the propeptide trigger a major conformation change, leading to the formation of a heptameric pre-pore that then inserts into the host membrane.

It is found in the secreted. It localises to the host cell membrane. Secreted, cytolytic toxin that forms pores in host membranes after proteolytic removal of a C-terminal propeptide, leading to destruction of the membrane permeability barrier and cell death. The pores are formed by transmembrane beta-strands and are approximately 3 nm in diameter. This chain is Aerolysin-5 (ahh5), found in Aeromonas hydrophila.